Here is a 573-residue protein sequence, read N- to C-terminus: Globulin-1 S allele (573 aa).

The segment at residues 1–18 (MVSARIVVLLAVLLCAAA) is a signal peptide (or 21). The propeptide occupies 19–86 (AVASSWEDDN…DRSGEGSSED (68 aa)). Residues 65-102 (EKRQERSRHEADDRSGEGSSEDEREREQEKEEKQKDRR) are disordered. Cupin type-1 domains lie at 104–262 (YVFD…DRLE) and 311–493 (YSLL…EEVD). Residues 288 to 315 (RHASEGGHGPHWPLPPFGESRGPYSLLD) are disordered. Asparagine 349 carries an N-linked (GlcNAc...) asparagine glycan. Disordered regions lie at residues 382–416 (PHRQ…EVGQ) and 498–573 (SRRE…TARM). Positions 390 to 402 (ESERERGKGRRSE) are enriched in basic and acidic residues. Over residues 403-413 (EEEESSEEQEE) the composition is skewed to acidic residues. 2 stretches are compositionally biased toward basic and acidic residues: residues 525–542 (EERH…REER) and 549–561 (REGR…REEV).

The protein belongs to the 7S seed storage protein family. In terms of processing, three protein-processing steps occur in the formation of the mature protein from the primary translation product.

The protein is Globulin-1 S allele (GLB1) of Zea mays (Maize).